Reading from the N-terminus, the 247-residue chain is MRNKKKLHGFFNFVRWLLVVLLIIVGLALVFNKPIRNAFIAHQSNHYQISRVSKKTIEKNKKSKTSYDFSSVKSISTESILSAQTKSHNLPVIGGIAIPDVEINLPIFKGLGNTELSYGAGTMKENQIMGGQNNYALASHHVFGLTGSSKMLFSPLEHAKKGMKVYLTDKSKVYTYTITEISKVTPEHVEVIDDTPGKSQLTLVTCTDPEATERIIVHAELEKTGEFSTADESILKAFSKKYNQINL.

The Cytoplasmic portion of the chain corresponds to 1–9 (MRNKKKLHG). A helical transmembrane segment spans residues 10–30 (FFNFVRWLLVVLLIIVGLALV). Residues 31 to 247 (FNKPIRNAFI…FSKKYNQINL (217 aa)) are Extracellular-facing. H140 serves as the catalytic Proton donor/acceptor. The active-site Acyl-thioester intermediate is the C206.

The protein belongs to the bacterial sortase family. Class A subfamily.

The protein resides in the cell membrane. In terms of biological role, transpeptidase that anchors surface proteins to the cell wall. Recognizes and modifies its substrate by proteolytic cleavage of a C-terminal sorting signal. Following cleavage, a covalent intermediate is formed via a thioester bond between the sortase and its substrate, which is then transferred and covalently attached to the cell wall. This sortase recognizes a Leu-Pro-x-Thr-Gly (LPXTG) motif, which is cleaved by the sortase between the threonine and glycine residues. Essential for adherence to eukaryotic cells and for binding to fibronectin and fibrinogen. In Streptococcus agalactiae serotype III (strain NEM316), this protein is Sortase A.